The sequence spans 199 residues: uncharacterized protein (199 aa).

4 helical membrane passes run 41–61 (LFIPPSACRIDLSVFPWAFIC), 72–92 (SLICSPCFSTVWVSLLICSPW), 109–129 (TVWVNLLICSPWAAKVVSIFV), and 145–165 (VTYSVFTGITGLLSLNCLLNL).

The protein to M.pneumoniae MPN_037.

The protein localises to the cell membrane. This is an uncharacterized protein from Mycoplasma pneumoniae (strain ATCC 29342 / M129 / Subtype 1) (Mycoplasmoides pneumoniae).